The sequence spans 243 residues: Clathrin light chain A (243 aa).

Met-1 carries the blocked amino end (Met) modification. 2 disordered regions span residues 1–22 (MAEL…GVAG) and 49–87 (ILDG…GPTD). The segment covering 10 to 20 (PAGGPALGNGV) has biased composition (gly residues). Residues 95–157 (VDRLQSEPES…QLQKTKANNR (63 aa)) form an involved in binding clathrin heavy chain region. Ser-100 and Ser-201 each carry phosphoserine. N6-acetyllysine is present on Lys-218. Ser-231 carries the post-translational modification Phosphoserine. The residue at position 237 (Lys-237) is an N6-acetyllysine.

This sequence belongs to the clathrin light chain family. Clathrin coats are formed from molecules containing 3 heavy chains and 3 light chains. Interacts with CALY; the interaction stimulates clathrin self-assembly and clathrin-mediated endocytosis. Interacts with CKAP5 and TACC3 forming the TACC3/ch-TOG/clathrin complex located at spindle inter-microtubules bridges; the complex implicates clathrin triskelions.

It is found in the cytoplasmic vesicle membrane. Its subcellular location is the membrane. It localises to the coated pit. The protein localises to the cytoplasm. The protein resides in the cytoskeleton. It is found in the spindle. Functionally, clathrin is the major protein of the polyhedral coat of coated pits and vesicles. Acts as a component of the TACC3/ch-TOG/clathrin complex proposed to contribute to stabilization of kinetochore fibers of the mitotic spindle by acting as inter-microtubule bridge. The polypeptide is Clathrin light chain A (CLTA) (Bos taurus (Bovine)).